The following is a 189-amino-acid chain: Ribosome maturation factor RimM (189 aa).

Positions 96–169 (EDEFYYADLE…TLLIDPLAAG (74 aa)) constitute a PRC barrel domain.

The protein belongs to the RimM family. Binds ribosomal protein uS19.

Its subcellular location is the cytoplasm. An accessory protein needed during the final step in the assembly of 30S ribosomal subunit, possibly for assembly of the head region. Essential for efficient processing of 16S rRNA. May be needed both before and after RbfA during the maturation of 16S rRNA. It has affinity for free ribosomal 30S subunits but not for 70S ribosomes. The polypeptide is Ribosome maturation factor RimM (Rhizobium johnstonii (strain DSM 114642 / LMG 32736 / 3841) (Rhizobium leguminosarum bv. viciae)).